Consider the following 160-residue polypeptide: MTKKKAHKPGSATIALNKRARHEYFIEDEYEAGLALQGWEVKSLRAGKANIGDSYVILKDGEAFLFGANFTPMAVASTHYVCDPTRTRKLLLNQRELDTLYGRINREGYTVVALSLYWKNAWCKVKIGVAKGKKQHDKRTDLKDREWALDKARIMKHAGR.

Belongs to the SmpB family.

The protein localises to the cytoplasm. Required for rescue of stalled ribosomes mediated by trans-translation. Binds to transfer-messenger RNA (tmRNA), required for stable association of tmRNA with ribosomes. tmRNA and SmpB together mimic tRNA shape, replacing the anticodon stem-loop with SmpB. tmRNA is encoded by the ssrA gene; the 2 termini fold to resemble tRNA(Ala) and it encodes a 'tag peptide', a short internal open reading frame. During trans-translation Ala-aminoacylated tmRNA acts like a tRNA, entering the A-site of stalled ribosomes, displacing the stalled mRNA. The ribosome then switches to translate the ORF on the tmRNA; the nascent peptide is terminated with the 'tag peptide' encoded by the tmRNA and targeted for degradation. The ribosome is freed to recommence translation, which seems to be the essential function of trans-translation. This Klebsiella pneumoniae (strain 342) protein is SsrA-binding protein.